The following is a 469-amino-acid chain: Uronate isomerase (469 aa).

The protein belongs to the metallo-dependent hydrolases superfamily. Uronate isomerase family.

The catalysed reaction is D-glucuronate = D-fructuronate. The enzyme catalyses aldehydo-D-galacturonate = keto-D-tagaturonate. Its pathway is carbohydrate metabolism; pentose and glucuronate interconversion. The chain is Uronate isomerase from Yersinia pseudotuberculosis serotype O:1b (strain IP 31758).